Reading from the N-terminus, the 629-residue chain is MEGKPRKKSFTPRDGKKPSFKSKGKPGGKPQGKRPFKPHNNDKGKGFRKSGGEGGPQKFNRKPTDGKFAKKRKFPGDRIKQEEGDERKKPKWDEFKQKKKELKLNRQQTDRKESYQIVSRAKQVWEMVRRKDCDKQKRTKLMKELQDLVKGKIKTIAFAHDSTRVLQCFIQFGSDKQRKEVFDELKEHIVELSKSKYARNIVKKFLMYGSKEQVGEVMLAFKGKVRQMLRHSEASSVVEYAYNDKAILSQRLMLTEELYGNTFTVLKSSVCPTLEKVLEANPGKLESILDEMKQILTPMAQKEAVIKHSLVHKVFLDFFEHAPDKQRTEMIESIREAVVYMAHTHDGARVTMHCLWHGTTKDRKVIVKTMKSYIAKFAMGEYAHLVLLAAFDCIDDTKLVKQIIISEMVSSLSEIISNKHGKKVLLYLLSPRDPAHLLPEIIQVLEKGDGNAHSKKDVLIRRKELLEAASPSLLNHLCENAQSMVMDKSCCVVVSDILGSAVGDLRPAMEAVAALADGPLIPGGKDGQLHMAEHPAGHLVLKWLIEQDTKMKDTEREERFSRILLEKVGLENLKTWASVNRGAIILCCLLQSADESVAEEVKAMLKSSIPELQRLQNSKGIEVLLEKLA.

2 stretches are compositionally biased toward basic residues: residues methionine 1–phenylalanine 10 and proline 18–lysine 37. The disordered stretch occupies residues methionine 1–tryptophan 92. A compositionally biased stretch (basic and acidic residues) spans lysine 62–tryptophan 92. The short motif at lysine 88–lysine 100 is the Nuclear localization signal element. The region spanning arginine 120–leucine 473 is the PUM-HD domain. Pumilio repeat units lie at residues histidine 160–serine 195, lysine 196–histidine 231, serine 232–glycine 260, proline 272–histidine 308, serine 309–threonine 344, histidine 345–glycine 380, glutamate 381–asparagine 418, lysine 419–aspartate 487, lysine 488–histidine 534, proline 535–valine 579, and asparagine 580–serine 618.

As to expression, in adult, expressed at high levels in eye and ovary and at lower levels in brain, testis and head kidney. In the adult ovary, prominently expressed in early immature follicles.

The protein localises to the nucleus. It localises to the nucleolus. The protein resides in the nucleoplasm. It is found in the chromosome. In terms of biological role, inhibits the poly(ADP-ribosyl)ation activity of PARP1 and the degradation of PARP1 by CASP3 following genotoxic stress. Binds to double-stranded RNA or DNA without sequence specificity. Involved in development of the eye and of primordial germ cells. This chain is Pumilio homolog 3 (pum3), found in Danio rerio (Zebrafish).